A 697-amino-acid chain; its full sequence is Protein Niban 3 (697 aa).

Residues 1-48 (MGPDRKEVPLSRGTQAVVVGKGRGAPGDDSSMGGRPSSPLDKQQRQHL) are disordered.

The protein belongs to the Niban family. As to expression, specifically expressed in B-lymphocytes.

In Homo sapiens (Human), this protein is Protein Niban 3.